Here is a 270-residue protein sequence, read N- to C-terminus: Phosphonates import ATP-binding protein PhnC 1 (270 aa).

The 244-residue stretch at 2 to 245 (LVVEGLTCRF…IARELYDLEA (244 aa)) folds into the ABC transporter domain. 34-41 (GRSGAGKS) is a binding site for ATP.

Belongs to the ABC transporter superfamily. Phosphonates importer (TC 3.A.1.9.1) family. As to quaternary structure, the complex is composed of two ATP-binding proteins (PhnC), two transmembrane proteins (PhnE) and a solute-binding protein (PhnD).

The protein resides in the cell inner membrane. The catalysed reaction is phosphonate(out) + ATP + H2O = phosphonate(in) + ADP + phosphate + H(+). Functionally, part of the ABC transporter complex PhnCDE involved in phosphonates import. Responsible for energy coupling to the transport system. This chain is Phosphonates import ATP-binding protein PhnC 1, found in Rhodopseudomonas palustris (strain ATCC BAA-98 / CGA009).